A 338-amino-acid polypeptide reads, in one-letter code: Glyceraldehyde-3-phosphate dehydrogenase (338 aa).

NAD(+)-binding positions include 12–13, Asp34, and Arg79; that span reads RI. Residues 150 to 152, Thr181, 210 to 211, and Arg233 each bind D-glyceraldehyde 3-phosphate; these read SCT and TG. The Nucleophile role is filled by Cys151. Asn315 contributes to the NAD(+) binding site.

This sequence belongs to the glyceraldehyde-3-phosphate dehydrogenase family. In terms of assembly, homotetramer.

The protein localises to the cytoplasm. The catalysed reaction is D-glyceraldehyde 3-phosphate + phosphate + NAD(+) = (2R)-3-phospho-glyceroyl phosphate + NADH + H(+). Its pathway is carbohydrate degradation; glycolysis; pyruvate from D-glyceraldehyde 3-phosphate: step 1/5. This Neurospora crassa (strain ATCC 24698 / 74-OR23-1A / CBS 708.71 / DSM 1257 / FGSC 987) protein is Glyceraldehyde-3-phosphate dehydrogenase (gpd-1).